A 445-amino-acid chain; its full sequence is Glutamate--tRNA ligase 2 (445 aa).

The 'HIGH' region motif lies at 10-20 (PSPTGRLHVGN). Positions 241-245 (ALSKR) match the 'KMSKS' region motif. Lys244 lines the ATP pocket.

The protein belongs to the class-I aminoacyl-tRNA synthetase family. Glutamate--tRNA ligase type 1 subfamily. In terms of assembly, monomer.

The protein localises to the cytoplasm. The catalysed reaction is tRNA(Glu) + L-glutamate + ATP = L-glutamyl-tRNA(Glu) + AMP + diphosphate. Catalyzes the attachment of glutamate to tRNA(Glu) in a two-step reaction: glutamate is first activated by ATP to form Glu-AMP and then transferred to the acceptor end of tRNA(Glu). The sequence is that of Glutamate--tRNA ligase 2 from Hyphomonas neptunium (strain ATCC 15444).